A 1677-amino-acid polypeptide reads, in one-letter code: Vitellogenin (1677 aa).

The first 8 residues, 1–8, serve as a signal peptide directing secretion; sequence LTIALVGS. In terms of domain architecture, Vitellogenin spans 17 to 655; sequence FSGSKTYQYK…NAASILPSAV (639 aa). Disordered regions lie at residues 1089–1232 and 1252–1280; these read TLRG…SEEI and FQNK…SKQD. Residues 1098 to 1122 are compositionally biased toward low complexity; sequence SSSSSSSSSSSSSSSSSSSSSSQQS. The segment covering 1123–1145 has biased composition (basic and acidic residues); sequence RMEKRMEQDKLTENLERDRDHMR. A compositionally biased stretch (low complexity) spans 1169–1196; that stretch reads SSSSSSSSSSSGSNSSSSSSSSSSSSSR. N-linked (GlcNAc...) asparagine glycans are attached at residues Asn-1182, Asn-1202, Asn-1217, and Asn-1218. Basic residues predominate over residues 1197 to 1212; it reads SHNHRNNTRTLSKSKR. Low complexity-rich tracts occupy residues 1215-1229 and 1260-1273; these read NNNN…SSSS and SSSS…SSQS. Positions 1490–1675 constitute a VWFD domain; the sequence is SKCVAQENKF…TATEAASFCV (186 aa). Intrachain disulfides connect Cys-1492–Cys-1631 and Cys-1515–Cys-1674. The span at 1636–1649 shows a compositional bias: basic and acidic residues; the sequence is GERRKEFRMPDGRQ. The interval 1636-1659 is disordered; sequence GERRKEFRMPDGRQARGPSVSPTP.

Post-translationally, phosvitin, an egg yolk storage protein, is one of the most highly phosphorylated (10%) proteins in nature. In terms of tissue distribution, found in liver, testis and undifferentiated gonads of estrogen-treated fish. Not detected in the brain and spleen.

Its function is as follows. Precursor of the major egg-yolk proteins that are sources of nutrients during early development of oviparous organisms. In Acipenser transmontanus (White sturgeon), this protein is Vitellogenin.